A 395-amino-acid polypeptide reads, in one-letter code: Elongation factor Tu (395 aa).

Residues 10–204 (KPHVNIGTIG…TVDSYIPEPK (195 aa)) enclose the tr-type G domain. The segment at 19–26 (GHVDHGKT) is G1. A GTP-binding site is contributed by 19-26 (GHVDHGKT). Thr-26 is a binding site for Mg(2+). A G2 region spans residues 60–64 (GITIN). The tract at residues 81-84 (DAPG) is G3. GTP-binding positions include 81 to 85 (DAPGH) and 136 to 139 (NKTD). The interval 136 to 139 (NKTD) is G4. Residues 174-176 (SAL) are G5.

Belongs to the TRAFAC class translation factor GTPase superfamily. Classic translation factor GTPase family. EF-Tu/EF-1A subfamily. Monomer.

It localises to the cytoplasm. It carries out the reaction GTP + H2O = GDP + phosphate + H(+). Functionally, GTP hydrolase that promotes the GTP-dependent binding of aminoacyl-tRNA to the A-site of ribosomes during protein biosynthesis. This is Elongation factor Tu from Leuconostoc citreum (strain KM20).